The sequence spans 608 residues: MNKEEMNARQKKIRNFSIIAHIDHGKSTLADRILEQTGALTHREMKNQLLDSMDLERERGITIKLNAVQLKYKAKDGETYIFHLIDTPGHVDFTYEVSRSLAACEGAILVVDAAQGIEAQTLANVYLALDNDLEILPVINKIDLPAADPERVREEIEDVIGLDASDAVLASAKSGIGIEDILEQIVEKVPEPSGDVNKPLKALIFDSVFDAYRGVIANIRIMDGVVKAGDRIKMMSNGKEFEVTEVGVFSPKATPRDELLVGDVGYLTAAIKNVGDTRVGDTITLANNPAEEALDGYRKLNPMVYCGLYPIDSSKYNDLRDALEKLELNDSALQFEAETSQALGFGFRCGFLGLLHMEIIQERIEREFNIDLITTAPSVIYHVNLTDGSNIVVDNPAEMPEPGVIESVEEPYVKATVMVPNDYVGAVMELAQNKRGNFITMEYLDDIRVSIVYEIPLSEIVYDFFDQLKSSTKGYASFDYELIGYKASKLVKMDILLNAEKVDALSFIVHRDFAYERGKIIVEKLKELIPRQQFEVPIQAAIATKIVSRSTIKALRKNVLAKCYGGDVSRKRKLLEKQKEGKKRMKQIGSVEVPQEAFMAILKMDESK.

In terms of domain architecture, tr-type G spans Lys11 to Ser193. Residues Asp23–Thr28 and Asn140–Asp143 contribute to the GTP site.

This sequence belongs to the TRAFAC class translation factor GTPase superfamily. Classic translation factor GTPase family. LepA subfamily.

It is found in the cell membrane. The catalysed reaction is GTP + H2O = GDP + phosphate + H(+). In terms of biological role, required for accurate and efficient protein synthesis under certain stress conditions. May act as a fidelity factor of the translation reaction, by catalyzing a one-codon backward translocation of tRNAs on improperly translocated ribosomes. Back-translocation proceeds from a post-translocation (POST) complex to a pre-translocation (PRE) complex, thus giving elongation factor G a second chance to translocate the tRNAs correctly. Binds to ribosomes in a GTP-dependent manner. The polypeptide is Elongation factor 4 (Listeria monocytogenes serotype 4b (strain CLIP80459)).